The sequence spans 369 residues: uncharacterized protein (369 aa).

This is an uncharacterized protein from Caenorhabditis elegans.